The chain runs to 143 residues: Large ribosomal subunit protein uL13 (143 aa).

This sequence belongs to the universal ribosomal protein uL13 family. Part of the 50S ribosomal subunit.

Functionally, this protein is one of the early assembly proteins of the 50S ribosomal subunit, although it is not seen to bind rRNA by itself. It is important during the early stages of 50S assembly. This is Large ribosomal subunit protein uL13 from Rubrobacter xylanophilus (strain DSM 9941 / JCM 11954 / NBRC 16129 / PRD-1).